The chain runs to 330 residues: Laforin (330 aa).

Positions 1–123 (MLFRFGVVVP…DNLVDGVYCL (123 aa)) constitute a CBM20 domain. At Ser25 the chain carries Phosphoserine; by AMPK. Substrate is bound by residues Trp32, Lys86, 102–106 (GPHHD), Asp196, Asp234, and Arg240. Residues 155–322 (HYSRILPNIW…QQDFSQKFGK (168 aa)) form the Tyrosine-protein phosphatase domain. The active-site Phosphocysteine intermediate is the Cys265. Residues 265–271 (CNAGVGR) carry the Glucan phosphatase signature motif CXAGXGR motif. Substrate is bound by residues 266–271 (NAGVGR) and Tyr303.

Belongs to the protein-tyrosine phosphatase family. In terms of assembly, homodimer. Interacts with PPP1R3B, PPP1R3C, HIRIP5, and EPM2AIP1. Binds glycogen and Lafora bodies. Interacts with NHLRC1/malin (via the NHL repeats). Forms a complex with NHLRC1/malin and HSP70. Interacts with PPP1R3D; in the presence of NHLC1/malin the interaction leads to ubiquitination and autophagic degradation of PPP1R3D. Interacts (via the phosphatase domain) with MAPT/Tau; the interaction dephosphorylates MAPT. Interacts with PRDM8. Post-translationally, polyubiquitinated by NHLRC1/malin. In terms of processing, phosphorylation on Ser-25 by AMPK affects the phosphatase activity of the enzyme and its ability to homodimerize and interact with NHLRC1, PPP1R3C or PRKAA2. As to expression, detected in skeletal muscle and in brain (at protein level). Widely expressed. Higher levels of expression are found in heart, brain, liver, skeletal muscle and kidney.

The protein resides in the cytoplasm. It localises to the endoplasmic reticulum membrane. It is found in the cell membrane. It catalyses the reaction O-phospho-L-tyrosyl-[protein] + H2O = L-tyrosyl-[protein] + phosphate. The enzyme catalyses O-phospho-L-seryl-[protein] + H2O = L-seryl-[protein] + phosphate. It carries out the reaction O-phospho-L-threonyl-[protein] + H2O = L-threonyl-[protein] + phosphate. Its function is as follows. Plays an important role in preventing glycogen hyperphosphorylation and the formation of insoluble aggregates, via its activity as glycogen phosphatase, and by promoting the ubiquitination of proteins involved in glycogen metabolism via its interaction with the E3 ubiquitin ligase NHLRC1/malin. Dephosphorylates phosphotyrosine and synthetic substrates, such as para-nitrophenylphosphate (pNPP), and has low activity with phosphoserine and phosphothreonine substrates (in vitro). Has also been shown to dephosphorylate MAPT. Shows strong phosphatase activity towards complex carbohydrates in vitro, avoiding glycogen hyperphosphorylation which is associated with reduced branching and formation of insoluble aggregates. Forms a complex with NHLRC1/malin and HSP70, which suppresses the cellular toxicity of misfolded proteins by promoting their degradation through the ubiquitin-proteasome system (UPS). Acts as a scaffold protein to facilitate PPP1R3C/PTG ubiquitination by NHLRC1/malin. Also promotes proteasome-independent protein degradation through the macroautophagy pathway. The polypeptide is Laforin (Epm2a) (Mus musculus (Mouse)).